We begin with the raw amino-acid sequence, 1809 residues long: Proprotein convertase subtilisin/kexin type 5 (1809 aa).

Positions 1-34 (MDWGWGSRCCRPGRRDLLCVLALLAGCLLPVCRT) are cleaved as a signal peptide. A propeptide spanning residues 35-116 (RVYTNHWAVK…QQVVKKRTKR (82 aa)) is cleaved from the precursor. Over 117 to 1700 (DYDLSRAQST…DTVFHEHTKT (1584 aa)) the chain is Extracellular. The Peptidase S8 domain occupies 136–455 (MWYMHCSDNT…FGLMDAEAMV (320 aa)). Residues aspartate 173 and histidine 214 each act as charge relay system in the active site. Residues asparagine 227 and asparagine 383 are each glycosylated (N-linked (GlcNAc...) asparagine). The Charge relay system role is filled by serine 388. A P/Homo B domain is found at 463 to 603 (TVPQQHVCVE…SLVLYGTSVQ (141 aa)). The short motif at 521 to 523 (RGD) is the Cell attachment site element. FU repeat units lie at residues 632-682 (EDYA…GHFH), 685-732 (KKRC…GSYQ), 736-779 (KNIC…GQFF), 781-826 (GHDC…SYYL), 834-881 (YKSC…GEYI), 884-929 (QGHC…WKFE), 931-964 (KKQC…QDSE), 965-1010 (YGEC…KTFG), 1012-1054 (KWEC…GFYG), 1058-1099 (LGEC…PTWP), 1137-1179 (TRQY…GTWL), 1183-1230 (SSSC…GFYA), 1232-1276 (DGVC…KHVA), 1278-1321 (EGVC…NFYP), 1323-1369 (MRQC…GTYK), 1373-1418 (NDEC…IEYW), 1422-1467 (SHRC…GYHT), 1471-1516 (SHQC…GYYG), 1520-1567 (SGRC…HYYA), 1571-1616 (AQTC…GEYR), and 1622-1669 (NFNC…SHPH). Residues 638-1685 (CDPECSEVGC…DCQSSTDECI (1048 aa)) form a CRM (Cys-rich motif) region. The N-linked (GlcNAc...) asparagine glycan is linked to asparagine 667. Asparagine 754, asparagine 804, and asparagine 854 each carry an N-linked (GlcNAc...) asparagine glycan. 2 N-linked (GlcNAc...) asparagine glycosylation sites follow: asparagine 1642 and asparagine 1664. A helical transmembrane segment spans residues 1701–1721 (ALLVTSGAMLLLLLGAAVVVW). At 1722–1809 (RKSRSQPVAK…EYDDESYSYQ (88 aa)) the chain is on the cytoplasmic side. AC regions lie at residues 1757 to 1776 (VIEY…IVYM) and 1788 to 1809 (YGLL…YSYQ).

Belongs to the peptidase S8 family. Expressed in the intestine, brain, adrenal gland, anterior pituitary, thyroid, ovaries, testis and lung. Highest levels are found in the gut, duodenum, jejunum and ileum. Expression is higher in female than in male reproductive organs.

The protein localises to the secreted. Its subcellular location is the endomembrane system. Functionally, serine endoprotease that processes various proproteins by cleavage at paired basic amino acids, recognizing the RXXX[KR]R consensus motif. Likely functions in the constitutive and regulated secretory pathways. Plays an essential role in pregnancy establishment by proteolytic activation of a number of important factors such as BMP2, CALD1 and alpha-integrins. May be responsible for the maturation of gastrointestinal peptides. May be involved in the cellular proliferation of adrenal cortex via the activation of growth factors. The chain is Proprotein convertase subtilisin/kexin type 5 (Pcsk5) from Rattus norvegicus (Rat).